The primary structure comprises 341 residues: Anthranilate phosphoribosyltransferase (341 aa).

Residues Gly79, 82 to 83 (GD), Thr87, 89 to 92 (NIST), 107 to 115 (KHGNRAVSS), and Ser119 each bind 5-phospho-alpha-D-ribose 1-diphosphate. Gly79 provides a ligand contact to anthranilate. Residue Ser91 coordinates Mg(2+). Asn110 contacts anthranilate. Arg165 serves as a coordination point for anthranilate. Asp224 and Glu225 together coordinate Mg(2+).

It belongs to the anthranilate phosphoribosyltransferase family. Homodimer. Requires Mg(2+) as cofactor.

The enzyme catalyses N-(5-phospho-beta-D-ribosyl)anthranilate + diphosphate = 5-phospho-alpha-D-ribose 1-diphosphate + anthranilate. The protein operates within amino-acid biosynthesis; L-tryptophan biosynthesis; L-tryptophan from chorismate: step 2/5. Its function is as follows. Catalyzes the transfer of the phosphoribosyl group of 5-phosphorylribose-1-pyrophosphate (PRPP) to anthranilate to yield N-(5'-phosphoribosyl)-anthranilate (PRA). The chain is Anthranilate phosphoribosyltransferase from Bacillus cereus (strain AH187).